Here is a 47-residue protein sequence, read N- to C-terminus: uncharacterized protein (47 aa).

This is an uncharacterized protein from Saccharomyces cerevisiae (strain ATCC 204508 / S288c) (Baker's yeast).